A 43-amino-acid chain; its full sequence is Antimicrobial protein PcfHb (43 aa).

As to quaternary structure, possible monomer. As to expression, expressed in mucus-secreting tissues.

It localises to the secreted. Its function is as follows. Shows antimicrobial activity against M.luteus (MIC=4 uM) and E.coli (MIC=12 uM), as well as against the yeast C.tropicalis (MIC=4 uM). Shows a pro-inflammatory effect, since the topical application of the protein induces an increase of cellular recruitment characterized by an increase in the number of leukocyte rolling. Does not show hemolytic activity on human erythrocytes (at doses up to 100 uM). The sequence is that of Antimicrobial protein PcfHb from Potamotrygon cf. henlei (Freshwater stingray).